Reading from the N-terminus, the 238-residue chain is Purine nucleoside phosphorylase DeoD-type (238 aa).

Histidine 4 contributes to the a purine D-ribonucleoside binding site. Phosphate is bound by residues glycine 20, arginine 24, arginine 43, and 87–90 (RVGS). Residues 179 to 181 (EME) and 203 to 204 (SD) contribute to the a purine D-ribonucleoside site. Aspartate 204 functions as the Proton donor in the catalytic mechanism.

The protein belongs to the PNP/UDP phosphorylase family. As to quaternary structure, homohexamer; trimer of homodimers.

It catalyses the reaction a purine D-ribonucleoside + phosphate = a purine nucleobase + alpha-D-ribose 1-phosphate. The catalysed reaction is a purine 2'-deoxy-D-ribonucleoside + phosphate = a purine nucleobase + 2-deoxy-alpha-D-ribose 1-phosphate. Catalyzes the reversible phosphorolytic breakdown of the N-glycosidic bond in the beta-(deoxy)ribonucleoside molecules, with the formation of the corresponding free purine bases and pentose-1-phosphate. This chain is Purine nucleoside phosphorylase DeoD-type, found in Histophilus somni (strain 2336) (Haemophilus somnus).